The primary structure comprises 103 residues: Large ribosomal subunit protein bL21 (103 aa).

It belongs to the bacterial ribosomal protein bL21 family. In terms of assembly, part of the 50S ribosomal subunit. Contacts protein L20.

Functionally, this protein binds to 23S rRNA in the presence of protein L20. The protein is Large ribosomal subunit protein bL21 of Chloroflexus aggregans (strain MD-66 / DSM 9485).